A 393-amino-acid chain; its full sequence is Lipid-A-disaccharide synthase (393 aa).

It belongs to the LpxB family.

The enzyme catalyses a lipid X + a UDP-2-N,3-O-bis[(3R)-3-hydroxyacyl]-alpha-D-glucosamine = a lipid A disaccharide + UDP + H(+). It functions in the pathway bacterial outer membrane biogenesis; LPS lipid A biosynthesis. Condensation of UDP-2,3-diacylglucosamine and 2,3-diacylglucosamine-1-phosphate to form lipid A disaccharide, a precursor of lipid A, a phosphorylated glycolipid that anchors the lipopolysaccharide to the outer membrane of the cell. The sequence is that of Lipid-A-disaccharide synthase from Bordetella pertussis (strain Tohama I / ATCC BAA-589 / NCTC 13251).